The primary structure comprises 422 residues: Elongation factor 1-alpha (422 aa).

The 217-residue stretch at 5 to 221 folds into the tr-type G domain; that stretch reads KPHMNLAVIG…DELKEPEKPS (217 aa). Positions 14 to 21 are G1; the sequence is GHIDHGKS. 14–21 lines the GTP pocket; sequence GHIDHGKS. Ser-21 contributes to the Mg(2+) binding site. The G2 stretch occupies residues 70 to 74; the sequence is GITID. The interval 91 to 94 is G3; that stretch reads DCPG. GTP contacts are provided by residues 91 to 95 and 146 to 149; these read DCPGH and NKMD. Residues 146–149 are G4; it reads NKMD. The tract at residues 185–187 is G5; the sequence is SAF.

The protein belongs to the TRAFAC class translation factor GTPase superfamily. Classic translation factor GTPase family. EF-Tu/EF-1A subfamily.

The protein localises to the cytoplasm. It catalyses the reaction GTP + H2O = GDP + phosphate + H(+). In terms of biological role, GTP hydrolase that promotes the GTP-dependent binding of aminoacyl-tRNA to the A-site of ribosomes during protein biosynthesis. The polypeptide is Elongation factor 1-alpha (Methanosarcina acetivorans (strain ATCC 35395 / DSM 2834 / JCM 12185 / C2A)).